Consider the following 340-residue polypeptide: DNA-directed RNA polymerase subunit alpha (340 aa).

The tract at residues 1–233 (MIQNEIPIPA…NLFIPLLHEK (233 aa)) is alpha N-terminal domain (alpha-NTD). Residues 263–340 (RKEISFKHIF…LPKNKFSIND (78 aa)) form an alpha C-terminal domain (alpha-CTD) region.

The protein belongs to the RNA polymerase alpha chain family. In terms of assembly, in plastids the minimal PEP RNA polymerase catalytic core is composed of four subunits: alpha, beta, beta', and beta''. When a (nuclear-encoded) sigma factor is associated with the core the holoenzyme is formed, which can initiate transcription.

The protein localises to the plastid. It localises to the chloroplast. The enzyme catalyses RNA(n) + a ribonucleoside 5'-triphosphate = RNA(n+1) + diphosphate. Functionally, DNA-dependent RNA polymerase catalyzes the transcription of DNA into RNA using the four ribonucleoside triphosphates as substrates. This Anthoceros angustus (Hornwort) protein is DNA-directed RNA polymerase subunit alpha (rpoA).